The primary structure comprises 305 residues: Methionyl-tRNA formyltransferase (305 aa).

108–111 contributes to the (6S)-5,6,7,8-tetrahydrofolate binding site; the sequence is SLLP.

This sequence belongs to the Fmt family.

It carries out the reaction L-methionyl-tRNA(fMet) + (6R)-10-formyltetrahydrofolate = N-formyl-L-methionyl-tRNA(fMet) + (6S)-5,6,7,8-tetrahydrofolate + H(+). Functionally, attaches a formyl group to the free amino group of methionyl-tRNA(fMet). The formyl group appears to play a dual role in the initiator identity of N-formylmethionyl-tRNA by promoting its recognition by IF2 and preventing the misappropriation of this tRNA by the elongation apparatus. The polypeptide is Methionyl-tRNA formyltransferase (Thermus thermophilus (strain ATCC BAA-163 / DSM 7039 / HB27)).